Reading from the N-terminus, the 194-residue chain is Peptidyl-tRNA hydrolase (194 aa).

A tRNA-binding site is contributed by Y17. Residue H22 is the Proton acceptor of the active site. 3 residues coordinate tRNA: F68, N70, and N116.

The protein belongs to the PTH family. In terms of assembly, monomer.

It localises to the cytoplasm. The catalysed reaction is an N-acyl-L-alpha-aminoacyl-tRNA + H2O = an N-acyl-L-amino acid + a tRNA + H(+). In terms of biological role, hydrolyzes ribosome-free peptidyl-tRNAs (with 1 or more amino acids incorporated), which drop off the ribosome during protein synthesis, or as a result of ribosome stalling. Its function is as follows. Catalyzes the release of premature peptidyl moieties from peptidyl-tRNA molecules trapped in stalled 50S ribosomal subunits, and thus maintains levels of free tRNAs and 50S ribosomes. This is Peptidyl-tRNA hydrolase from Proteus mirabilis (strain HI4320).